We begin with the raw amino-acid sequence, 100 residues long: Small ribosomal subunit protein uS14c (100 aa).

It belongs to the universal ribosomal protein uS14 family. In terms of assembly, part of the 30S ribosomal subunit.

The protein resides in the plastid. It is found in the chloroplast. In terms of biological role, binds 16S rRNA, required for the assembly of 30S particles. The chain is Small ribosomal subunit protein uS14c from Amborella trichopoda.